Here is a 206-residue protein sequence, read N- to C-terminus: Large ribosomal subunit protein uL4 (206 aa).

The segment at Ala43–Ser78 is disordered. The segment covering Lys49–His58 has biased composition (basic and acidic residues). A compositionally biased stretch (basic residues) spans Thr59–Gly70.

The protein belongs to the universal ribosomal protein uL4 family. Part of the 50S ribosomal subunit.

One of the primary rRNA binding proteins, this protein initially binds near the 5'-end of the 23S rRNA. It is important during the early stages of 50S assembly. It makes multiple contacts with different domains of the 23S rRNA in the assembled 50S subunit and ribosome. Its function is as follows. Forms part of the polypeptide exit tunnel. The polypeptide is Large ribosomal subunit protein uL4 (Ralstonia nicotianae (strain ATCC BAA-1114 / GMI1000) (Ralstonia solanacearum)).